A 176-amino-acid polypeptide reads, in one-letter code: Nucleoside triphosphate/diphosphate phosphatase (176 aa).

Arg23 serves as the catalytic Proton donor. Mg(2+)-binding residues include Asn87, Asp103, Asp105, Asp107, Asp120, and Glu123.

This sequence belongs to the Ntdp family. Requires Mg(2+) as cofactor.

It catalyses the reaction a ribonucleoside 5'-triphosphate + H2O = a ribonucleoside 5'-diphosphate + phosphate + H(+). The catalysed reaction is a ribonucleoside 5'-diphosphate + H2O = a ribonucleoside 5'-phosphate + phosphate + H(+). Has nucleoside phosphatase activity towards nucleoside triphosphates and nucleoside diphosphates. This Bacillus pumilus (strain SAFR-032) protein is Nucleoside triphosphate/diphosphate phosphatase.